The chain runs to 684 residues: MFAEAAKTTRPCGMAEFKEKPEAPTEQLDVACGQENLPVGAWPPGAAPAPFQYTPDHVVGPGADIDPTQITFPGCICVKTPCLPGTCSCLRHGENYDDNSCLRDIGSGGKYAEPVFECNVLCRCSDHCRNRVVQKGLQFHFQVFKTHKKGWGLRTLEFIPKGRFVCEYAGEVLGFSEVQRRIHLQTKSDSNYIIAIREHVYNGQVMETFVDPTYIGNIGRFLNHSCEPNLLMIPVRIDSMVPKLALFAAKDIVPEEELSYDYSGRYLNLTVSEDKERLDHGKLRKPCYCGAKSCTAFLPFDSSLYCPVEKSNISCGNEKEPSMCGSAPSVFPSCKRLTLETMKMMLDKKQIRAIFLFEFKMGRKAAETTRNINNAFGPGTANERTVQWWFKKFCKGDESLEDEERSGRPSEVDNDQLRAIIEADPLTTTREVAEELNVNHSTVVRHLKQIGKVKKLDKWVPHELTENQKNRRFEVSSSLILRNHNEPFLDRIVTCDEKWILYDNRRRSAQWLDQEEAPKHFPKPILHPKKVMVTIWWSAAGLIHYSFLNPGETITSEKYAQEIDEMNQKLQRLQLALVNRKGPILLHDNARPHVAQPTLQKLNELGYEVLPHPPYSPDLLPTNYHVFKHLNNFLQGKRFHNQQDAENAFQEFVESQSTDFYATGINQLISRWQKCVDCNGSYFD.

A histone-lysine N-methyltransferase region spans residues 1-345 (MFAEAAKTTR…RLTLETMKMM (345 aa)). In terms of domain architecture, Pre-SET spans 73–136 (PGCICVKTPC…HCRNRVVQKG (64 aa)). 9 residues coordinate Zn(2+): cysteine 75, cysteine 77, cysteine 82, cysteine 87, cysteine 89, cysteine 118, cysteine 122, cysteine 124, and cysteine 128. The SET domain occupies 139 to 263 (FHFQVFKTHK…PEEELSYDYS (125 aa)). Residues 149 to 151 (KGW), tyrosine 192, arginine 220, and 223 to 224 (NH) contribute to the S-adenosyl-L-methionine site. The Zn(2+) site is built by cysteine 226, cysteine 287, cysteine 289, and cysteine 294. The region spanning 283 to 299 (LRKPCYCGAKSCTAFLP) is the Post-SET domain. The segment at 346–684 (LDKKQIRAIF…CVDCNGSYFD (339 aa)) is mariner transposase Hsmar1. 2 consecutive DNA-binding regions (H-T-H motif) follow at residues 364–395 (KAAETTRNINNAFGPGTANERTVQWWFKKFCK) and 428–448 (TTREVAEELNVNHSTVVRHLK). Residue aspartate 496 coordinates Mg(2+). Residue lysine 498 is modified to N6-methyllysine. Phosphoserine; by CHEK1 is present on serine 508. Residue aspartate 588 coordinates Mg(2+).

This sequence in the N-terminal section; belongs to the class V-like SAM-binding methyltransferase superfamily. It in the C-terminal section; belongs to the mariner transposase family. As to quaternary structure, homodimer. Interacts with PRPF19; required for SETMAR recruitment to damaged DNA sites. Interacts with PCNA. Interacts with TOP2A; stimulates TOP2A topoisomerase activity. May interact with RAD9A and/or RAD9B. It depends on Mg(2+) as a cofactor. Methylated. Methylation regulates activity in DNA decatenation. In terms of processing, phosphorylated at Ser-508 by CHEK1 and dephosphorylated by protein phosphatase 2A/PP2A. Phosphorylation at Ser-508 is enhanced by DNA damage and promotes recruitment to damaged DNA. It stimulates DNA repair and impairs replication fork restart. Widely expressed, with highest expression in placenta and ovary and lowest expression in skeletal muscle.

The protein resides in the nucleus. It localises to the chromosome. The catalysed reaction is L-lysyl(36)-[histone H3] + 2 S-adenosyl-L-methionine = N(6),N(6)-dimethyl-L-lysyl(36)-[histone H3] + 2 S-adenosyl-L-homocysteine + 2 H(+). Protein derived from the fusion of a methylase with the transposase of an Hsmar1 transposon that plays a role in DNA double-strand break repair, stalled replication fork restart and DNA integration. DNA-binding protein, it is indirectly recruited to sites of DNA damage through protein-protein interactions. Also has kept a sequence-specific DNA-binding activity recognizing the 19-mer core of the 5'-terminal inverted repeats (TIRs) of the Hsmar1 element and displays a DNA nicking and end joining activity. In parallel, has a histone methyltransferase activity and methylates 'Lys-4' and 'Lys-36' of histone H3. Specifically mediates dimethylation of H3 'Lys-36' at sites of DNA double-strand break and may recruit proteins required for efficient DSB repair through non-homologous end-joining. Also regulates replication fork processing, promoting replication fork restart and regulating DNA decatenation through stimulation of the topoisomerase activity of TOP2A. The sequence is that of Histone-lysine N-methyltransferase SETMAR from Homo sapiens (Human).